The sequence spans 131 residues: Large ribosomal subunit protein bL21 (131 aa).

This sequence belongs to the bacterial ribosomal protein bL21 family. In terms of assembly, part of the 50S ribosomal subunit. Contacts protein L20.

Functionally, this protein binds to 23S rRNA in the presence of protein L20. In Cereibacter sphaeroides (strain ATCC 17023 / DSM 158 / JCM 6121 / CCUG 31486 / LMG 2827 / NBRC 12203 / NCIMB 8253 / ATH 2.4.1.) (Rhodobacter sphaeroides), this protein is Large ribosomal subunit protein bL21.